The following is a 307-amino-acid chain: Pyridoxal 5'-phosphate synthase subunit PdxS (307 aa).

The span at 1–10 (MRGQPRPKLR) shows a compositional bias: basic residues. The disordered stretch occupies residues 1–20 (MRGQPRPKLRRMTEQQTGTP). A D-ribose 5-phosphate-binding site is contributed by Asp-37. The active-site Schiff-base intermediate with D-ribose 5-phosphate is the Lys-94. Position 166 (Gly-166) interacts with D-ribose 5-phosphate. Arg-178 is a binding site for D-glyceraldehyde 3-phosphate. Residues Gly-227 and 248–249 (GS) contribute to the D-ribose 5-phosphate site.

It belongs to the PdxS/SNZ family. As to quaternary structure, in the presence of PdxT, forms a dodecamer of heterodimers.

The enzyme catalyses aldehydo-D-ribose 5-phosphate + D-glyceraldehyde 3-phosphate + L-glutamine = pyridoxal 5'-phosphate + L-glutamate + phosphate + 3 H2O + H(+). It functions in the pathway cofactor biosynthesis; pyridoxal 5'-phosphate biosynthesis. Functionally, catalyzes the formation of pyridoxal 5'-phosphate from ribose 5-phosphate (RBP), glyceraldehyde 3-phosphate (G3P) and ammonia. The ammonia is provided by the PdxT subunit. Can also use ribulose 5-phosphate and dihydroxyacetone phosphate as substrates, resulting from enzyme-catalyzed isomerization of RBP and G3P, respectively. The chain is Pyridoxal 5'-phosphate synthase subunit PdxS from Deinococcus radiodurans (strain ATCC 13939 / DSM 20539 / JCM 16871 / CCUG 27074 / LMG 4051 / NBRC 15346 / NCIMB 9279 / VKM B-1422 / R1).